A 547-amino-acid chain; its full sequence is Chaperonin GroEL (547 aa).

Residues 30-33, Lys-51, 87-91, Gly-415, and Asp-496 contribute to the ATP site; these read TLGP and DGTTT. Residues 527–547 form a disordered region; that stretch reads ENTPDMPAMPPGGMGGMGGMY. Gly residues predominate over residues 538–547; sequence GGMGGMGGMY.

It belongs to the chaperonin (HSP60) family. As to quaternary structure, forms a cylinder of 14 subunits composed of two heptameric rings stacked back-to-back. Interacts with the co-chaperonin GroES.

It localises to the cytoplasm. It catalyses the reaction ATP + H2O + a folded polypeptide = ADP + phosphate + an unfolded polypeptide.. Together with its co-chaperonin GroES, plays an essential role in assisting protein folding. The GroEL-GroES system forms a nano-cage that allows encapsulation of the non-native substrate proteins and provides a physical environment optimized to promote and accelerate protein folding. In Chlorobium phaeovibrioides (strain DSM 265 / 1930) (Prosthecochloris vibrioformis (strain DSM 265)), this protein is Chaperonin GroEL.